A 500-amino-acid polypeptide reads, in one-letter code: MTTTSNLPEQADIVMIGAGIMSATLATVLKALEPSLKIVMLETLNDCAMESSNGWNNAGTGHAANCEMNYTPPRPDGTVDISRALEVNTEFDLSRQLWSYLVKTGAIPDPQAFIHPCPHMSMVWGADNVKYLRQRFKEMSAHHCYRGMEYSEDPKQIAEWVPLVMQGRSGNEPIAVTRIVSGADVDYGALTHLLIKSLTEQAGFEVHYLKHVHDLARQRDGSWRIGIRDRGSKAQQTIQAKFVFVGAGGGAIELLQKSGIPEGHGYGGFPVSGIWLRCDVDSMSERHHAKVYGKAPHGSPPMSVPHLDTRIIGGKRSLLFGPYAGFSSRFLKHGSLTDLFRSVRPGNVLPMLDVAKDNWPLTEYLVSQVLQSAGHQFEMLRQYYPEARNHDWTHAVAGQRVQIIKPGTDKVGVLEFGTELVTSADRSFAALLGASPGASTAAFIALEVLQKCFADKLTADAWLPRLKTVIPTYGVDLKTDAEACFSIRKSTASVLNLDYV.

This sequence belongs to the MQO family. FAD is required as a cofactor.

The enzyme catalyses (S)-malate + a quinone = a quinol + oxaloacetate. The protein operates within carbohydrate metabolism; tricarboxylic acid cycle; oxaloacetate from (S)-malate (quinone route): step 1/1. The sequence is that of Probable malate:quinone oxidoreductase from Bordetella avium (strain 197N).